The sequence spans 73 residues: Signaling peptide TAXIMIN 2 (73 aa).

Residues 1–27 form the signal peptide; sequence MGDCRPLGFLIGLPFALVALVLALVGA.

In terms of tissue distribution, confined to the vasculature of various organs, including seedling roots, leaves, cotyledons, sepals and petals. Also accumulates in root hair cells.

Its subcellular location is the secreted. Its function is as follows. Signaling peptide involved in the regulation of lateral organs separation. This is Signaling peptide TAXIMIN 2 from Arabidopsis thaliana (Mouse-ear cress).